We begin with the raw amino-acid sequence, 221 residues long: Peptide methionine sulfoxide reductase MsrA (221 aa).

The active site involves cysteine 54.

The protein belongs to the MsrA Met sulfoxide reductase family.

It catalyses the reaction L-methionyl-[protein] + [thioredoxin]-disulfide + H2O = L-methionyl-(S)-S-oxide-[protein] + [thioredoxin]-dithiol. The catalysed reaction is [thioredoxin]-disulfide + L-methionine + H2O = L-methionine (S)-S-oxide + [thioredoxin]-dithiol. In terms of biological role, has an important function as a repair enzyme for proteins that have been inactivated by oxidation. Catalyzes the reversible oxidation-reduction of methionine sulfoxide in proteins to methionine. The sequence is that of Peptide methionine sulfoxide reductase MsrA from Methylobacterium nodulans (strain LMG 21967 / CNCM I-2342 / ORS 2060).